The primary structure comprises 254 residues: Protein odd-skipped-related 2 (254 aa).

C2H2-type zinc fingers lie at residues 124–146, 152–174, and 180–202; these read FICK…ERTH, YSCD…KYIH, and FKCE…RATH.

Belongs to the Odd C2H2-type zinc-finger protein family.

It localises to the nucleus. May function as transcription regulator. Required for morphogenesis and function of the digestive tract. This is Protein odd-skipped-related 2 from Caenorhabditis elegans.